The following is a 647-amino-acid chain: DNA ligase (647 aa).

NAD(+) contacts are provided by residues 30–34 (DEEYD), 79–80 (SM), and Glu-105. Lys-107 serves as the catalytic N6-AMP-lysine intermediate. Arg-128, Glu-162, and Lys-301 together coordinate NAD(+). Cys-395, Cys-398, Cys-411, and Cys-416 together coordinate Zn(2+). Residues 570-647 (KSDGVIFGKT…ESAFNELVKE (78 aa)) form the BRCT domain.

It belongs to the NAD-dependent DNA ligase family. LigA subfamily. It depends on Mg(2+) as a cofactor. Mn(2+) is required as a cofactor.

The enzyme catalyses NAD(+) + (deoxyribonucleotide)n-3'-hydroxyl + 5'-phospho-(deoxyribonucleotide)m = (deoxyribonucleotide)n+m + AMP + beta-nicotinamide D-nucleotide.. Its function is as follows. DNA ligase that catalyzes the formation of phosphodiester linkages between 5'-phosphoryl and 3'-hydroxyl groups in double-stranded DNA using NAD as a coenzyme and as the energy source for the reaction. It is essential for DNA replication and repair of damaged DNA. The protein is DNA ligase of Campylobacter jejuni subsp. jejuni serotype O:23/36 (strain 81-176).